A 235-amino-acid chain; its full sequence is C-type lectin domain family 2 member D-related protein (235 aa).

A disordered region spans residues 1–50 (MPSSAHLQDPPPHLSRTLTQDEEQTSLRQSSSCGPSTTSASASESLSGST). Residues 1–75 (MPSSAHLQDP…KIIPTESAAK (75 aa)) lie on the Cytoplasmic side of the membrane. The span at 30–50 (SSSCGPSTTSASASESLSGST) shows a compositional bias: low complexity. The chain crosses the membrane as a helical; Signal-anchor for type II membrane protein span at residues 76 to 96 (LLCCYAVFMALTVVVIALSIA). The Extracellular portion of the chain corresponds to 97 to 235 (LSVKKTPQIS…KLNSYTSQCP (139 aa)). Positions 121–232 (FGNKCYYFNE…ICSKLNSYTS (112 aa)) constitute a C-type lectin domain. Asn-134 carries an N-linked (GlcNAc...) asparagine glycan.

It localises to the cell membrane. Lectin-type cell surface receptor. The polypeptide is C-type lectin domain family 2 member D-related protein (Rattus norvegicus (Rat)).